The chain runs to 174 residues: Small ribosomal subunit protein uS5 (174 aa).

The S5 DRBM domain maps to 18–81; it reads LKDRLVSVNR…EDAKKNLVKI (64 aa).

Belongs to the universal ribosomal protein uS5 family. As to quaternary structure, part of the 30S ribosomal subunit. Contacts proteins S4 and S8.

With S4 and S12 plays an important role in translational accuracy. Its function is as follows. Located at the back of the 30S subunit body where it stabilizes the conformation of the head with respect to the body. In Flavobacterium psychrophilum (strain ATCC 49511 / DSM 21280 / CIP 103535 / JIP02/86), this protein is Small ribosomal subunit protein uS5.